Here is an 81-residue protein sequence, read N- to C-terminus: Photosystem I iron-sulfur center (81 aa).

2 consecutive 4Fe-4S ferredoxin-type domains span residues 2-31 (AHSV…MVPW) and 39-68 (IASA…VRVY). [4Fe-4S] cluster-binding residues include Cys-11, Cys-14, Cys-17, Cys-21, Cys-48, Cys-51, Cys-54, and Cys-58.

As to quaternary structure, the eukaryotic PSI reaction center is composed of at least 11 subunits. [4Fe-4S] cluster is required as a cofactor.

The protein resides in the plastid. It is found in the chloroplast thylakoid membrane. It catalyses the reaction reduced [plastocyanin] + hnu + oxidized [2Fe-2S]-[ferredoxin] = oxidized [plastocyanin] + reduced [2Fe-2S]-[ferredoxin]. Its function is as follows. Apoprotein for the two 4Fe-4S centers FA and FB of photosystem I (PSI); essential for photochemical activity. FB is the terminal electron acceptor of PSI, donating electrons to ferredoxin. The C-terminus interacts with PsaA/B/D and helps assemble the protein into the PSI complex. Required for binding of PsaD and PsaE to PSI. PSI is a plastocyanin-ferredoxin oxidoreductase, converting photonic excitation into a charge separation, which transfers an electron from the donor P700 chlorophyll pair to the spectroscopically characterized acceptors A0, A1, FX, FA and FB in turn. The protein is Photosystem I iron-sulfur center of Gnetum parvifolium (Small-leaved jointfir).